A 55-amino-acid chain; its full sequence is A-type ATP synthase subunit G (55 aa).

Has multiple subunits, A(3), B(3), C, D, E, F, G, I and K(x); there may be a few other subunits as well.

The protein localises to the cell membrane. Its function is as follows. Component of the A-type ATP synthase that produces ATP from ADP in the presence of a proton gradient across the membrane. The polypeptide is A-type ATP synthase subunit G (atpG) (Methanosarcina mazei (strain ATCC BAA-159 / DSM 3647 / Goe1 / Go1 / JCM 11833 / OCM 88) (Methanosarcina frisia)).